A 362-amino-acid chain; its full sequence is Methylthioribose-1-phosphate isomerase (362 aa).

Asp252 (proton donor) is an active-site residue.

The protein belongs to the eIF-2B alpha/beta/delta subunits family. MtnA subfamily.

It localises to the cytoplasm. The protein localises to the nucleus. The enzyme catalyses 5-(methylsulfanyl)-alpha-D-ribose 1-phosphate = 5-(methylsulfanyl)-D-ribulose 1-phosphate. The protein operates within amino-acid biosynthesis; L-methionine biosynthesis via salvage pathway; L-methionine from S-methyl-5-thio-alpha-D-ribose 1-phosphate: step 1/6. Functionally, catalyzes the interconversion of methylthioribose-1-phosphate (MTR-1-P) into methylthioribulose-1-phosphate (MTRu-1-P). The protein is Methylthioribose-1-phosphate isomerase of Drosophila persimilis (Fruit fly).